A 113-amino-acid polypeptide reads, in one-letter code: Protein translation factor SUI1 homolog 1 (113 aa).

The tract at residues 1–24 (MSELDSQVPTAFDPFADANAEDSG) is disordered. S2 carries the N-acetylserine modification.

The protein belongs to the SUI1 family.

Functionally, probably involved in translation. The chain is Protein translation factor SUI1 homolog 1 from Arabidopsis thaliana (Mouse-ear cress).